The sequence spans 244 residues: Phosphoadenosine 5'-phosphosulfate reductase (244 aa).

Cys239 (nucleophile; cysteine thiosulfonate intermediate) is an active-site residue.

This sequence belongs to the PAPS reductase family. CysH subfamily.

The protein resides in the cytoplasm. It carries out the reaction [thioredoxin]-disulfide + sulfite + adenosine 3',5'-bisphosphate + 2 H(+) = [thioredoxin]-dithiol + 3'-phosphoadenylyl sulfate. The protein operates within sulfur metabolism; hydrogen sulfide biosynthesis; sulfite from sulfate: step 3/3. Catalyzes the formation of sulfite from phosphoadenosine 5'-phosphosulfate (PAPS) using thioredoxin as an electron donor. This Shigella dysenteriae serotype 1 (strain Sd197) protein is Phosphoadenosine 5'-phosphosulfate reductase.